The following is a 568-amino-acid chain: Lariat debranching enzyme (568 aa).

A divalent metal cation is bound by residues C8, H10, D39, and N84. Residues 124–154 (SGIFKSHDFKKGHFEFPPYNPETLRSVYHIR) are lariat recognition loop. A divalent metal cation contacts are provided by H174, H226, and H228. Positions 388 to 568 (IYGERGGKGA…TAVEDEESDS (181 aa)) are disordered. Over residues 417-428 (PSDTSGLSSSYN) the composition is skewed to polar residues. Positions 432–444 (ITIEDEWEEEEDG) are enriched in acidic residues. A compositionally biased stretch (basic and acidic residues) spans 467–480 (DSDRDSSPQRETAK). T478 carries the post-translational modification Phosphothreonine. The segment covering 534 to 549 (GETTQSSAGQTGGTPQ) has biased composition (low complexity). S568 is modified (phosphoserine).

The protein belongs to the lariat debranching enzyme family. Requires Fe(2+) as cofactor. The cofactor is Zn(2+). Mn(2+) is required as a cofactor.

The protein localises to the nucleus. With respect to regulation, active in presence of diverse metals including Fe(2+), Zn(2+), Mn(2+). Also activated by Ca(2+). Binds two metal cations in two adjacent alpha and beta metal-binding pockets. Functionally, cleaves the 2'-5' phosphodiester linkage at the branch point of excised lariat intron RNA and converts them into linear molecules that can be subsequently degraded, thereby facilitating ribonucleotide turnover. Linked to its role in pre-mRNA processing mechanism, may also participate in retrovirus replication and have an antiviral cell-intrinsic defense function. This chain is Lariat debranching enzyme (dbr1), found in Danio rerio (Zebrafish).